Here is a 377-residue protein sequence, read N- to C-terminus: MRRLNRKKTLSLVKELDAFPKVPESYVETSASGGTVSLIAFTTMALLTIMEFSVYQDTWMKYEYEVDKDFSSKLRINIDITVAMKCQYVGADVLDLAETMVASADGLVYEPAVFDLSPQQKEWQRMLQLTQSRLQEEHSLQDVIFKSAFKSASTALPPREDDSSQSPDACRIHGHLYVNKVAGNFHITVGKAIPHPRGHAHLAALVNHESYNFSHRIDHLSFGELVPAIINPLDGTEKIAIDHNQMFQYFITVVPTKLHTYKISADTHQFSVTERERIINHAAGSHGVSGIFMKYDLSSLMVTVTEEHMPFWQFFVRLCGIVGGIFSTTGMLHGIGKFIVEIICCRFRLGSYKPVNSVPFEDGHTDNHLPLLENNTH.

Topologically, residues 1 to 33 (MRRLNRKKTLSLVKELDAFPKVPESYVETSASG) are cytoplasmic. A helical membrane pass occupies residues 34–54 (GTVSLIAFTTMALLTIMEFSV). Over 55-319 (YQDTWMKYEY…PFWQFFVRLC (265 aa)) the chain is Lumenal. Residues 320–340 (GIVGGIFSTTGMLHGIGKFIV) form a helical membrane-spanning segment. Over 341–377 (EIICCRFRLGSYKPVNSVPFEDGHTDNHLPLLENNTH) the chain is Cytoplasmic.

The protein belongs to the ERGIC family. In terms of assembly, may form a heteromeric complex composed of ERGIC1, ERGIC2 and ERGIC3. Interacts with ERGIC3, the interaction is required for the stable expression of both proteins. May interact with EEF1A1.

Its subcellular location is the endoplasmic reticulum-Golgi intermediate compartment membrane. The protein localises to the golgi apparatus. The protein resides in the cis-Golgi network membrane. It localises to the endoplasmic reticulum membrane. It is found in the cytoplasm. Its subcellular location is the nucleus. In terms of biological role, possible role in transport between endoplasmic reticulum and Golgi. The sequence is that of Endoplasmic reticulum-Golgi intermediate compartment protein 2 (ERGIC2) from Macaca fascicularis (Crab-eating macaque).